Consider the following 1024-residue polypeptide: Error-prone DNA polymerase (1024 aa).

The protein belongs to the DNA polymerase type-C family. DnaE2 subfamily.

Its subcellular location is the cytoplasm. It catalyses the reaction DNA(n) + a 2'-deoxyribonucleoside 5'-triphosphate = DNA(n+1) + diphosphate. Its function is as follows. DNA polymerase involved in damage-induced mutagenesis and translesion synthesis (TLS). It is not the major replicative DNA polymerase. The polypeptide is Error-prone DNA polymerase (Pseudomonas paraeruginosa (strain DSM 24068 / PA7) (Pseudomonas aeruginosa (strain PA7))).